A 104-amino-acid polypeptide reads, in one-letter code: uncharacterized protein (104 aa).

2 disordered regions span residues 1-48 (MLRR…NNQP) and 66-104 (QENT…RRCS).

This is an uncharacterized protein from Saccharomyces cerevisiae (strain ATCC 204508 / S288c) (Baker's yeast).